Here is a 270-residue protein sequence, read N- to C-terminus: NADPH-dependent aldehyde reductase-like protein, chloroplastic (270 aa).

Residues 1 to 53 (MSTHSSISQPPLPLAGRVAIVTGSSRGIGRAIAIHLAELGARIVINYTSKAAD) constitute a chloroplast transit peptide. 26–50 (RGIGRAIAIHLAELGARIVINYTSK) is an NADP(+) binding site. Ser165 is a substrate binding site. The Proton acceptor role is filled by Tyr178.

This sequence belongs to the short-chain dehydrogenases/reductases (SDR) family.

The protein resides in the plastid. Its subcellular location is the chloroplast. Aldehyde reductase that catalyzes the reduction of the aldehyde carbonyl groups on saturated and alpha,beta-unsaturated aldehydes with more than 5 carbons. This chain is NADPH-dependent aldehyde reductase-like protein, chloroplastic, found in Arabidopsis thaliana (Mouse-ear cress).